The chain runs to 430 residues: Ribulose bisphosphate carboxylase (430 aa).

The Proton acceptor role is filled by Lys-160. Lys-162 contributes to the substrate binding site. Positions 186, 188, and 189 each coordinate Mg(2+). Lys-186 bears the N6-carboxylysine mark. His-278 functions as the Proton acceptor in the catalytic mechanism. Residues Arg-279, His-311, 348 to 350, and 370 to 373 contribute to the substrate site; these read SGG and QAGG.

This sequence belongs to the RuBisCO large chain family. Type III subfamily. Homodimer or homodecamer. In contrast to form I RuBisCO, the form III RuBisCO is composed solely of large subunits. Mg(2+) is required as a cofactor.

It carries out the reaction 2 (2R)-3-phosphoglycerate + 2 H(+) = D-ribulose 1,5-bisphosphate + CO2 + H2O. The catalysed reaction is D-ribulose 1,5-bisphosphate + O2 = 2-phosphoglycolate + (2R)-3-phosphoglycerate + 2 H(+). Functionally, catalyzes the addition of molecular CO(2) and H(2)O to ribulose 1,5-bisphosphate (RuBP), generating two molecules of 3-phosphoglycerate (3-PGA). Functions in an archaeal AMP degradation pathway, together with AMP phosphorylase and R15P isomerase. The sequence is that of Ribulose bisphosphate carboxylase from Pyrococcus horikoshii (strain ATCC 700860 / DSM 12428 / JCM 9974 / NBRC 100139 / OT-3).